Reading from the N-terminus, the 206-residue chain is Oligoribonuclease (206 aa).

Residues 20–183 form the Exonuclease domain; it reads LVWLDMEMTG…ADIHESIDEL (164 aa). The active site involves Y141.

It belongs to the oligoribonuclease family.

The protein localises to the cytoplasm. 3'-to-5' exoribonuclease specific for small oligoribonucleotides. In Burkholderia cenocepacia (strain HI2424), this protein is Oligoribonuclease.